The sequence spans 334 residues: O(6)-methylguanine-induced apoptosis 2 (334 aa).

Positions 1–60 (MDNSAQKNERTGKHPRRASEVQKGFTAAYPTQSSIPFKSQASVIPESEKKGFNSQAKRFP) are disordered. The span at 7–20 (KNERTGKHPRRASE) shows a compositional bias: basic and acidic residues. A compositionally biased stretch (polar residues) spans 29-42 (YPTQSSIPFKSQAS). STPGR repeat units lie at residues 67-74 (PGPGFYNV), 109-117 (PAANAYTIP), 148-155 (PAPNYYNA), 187-206 (GPPP…SPNT), 225-257 (GPGP…SAQP), 267-282 (PGPG…GPRK), and 306-316 (LPGPATYKPEL). Phosphotyrosine is present on Y72.

It belongs to the STPG1 family.

The protein localises to the cytoplasm. It localises to the nucleus. Functionally, may positively contribute to the induction of apoptosis triggered by O(6)-methylguanine. This Homo sapiens (Human) protein is O(6)-methylguanine-induced apoptosis 2 (STPG1).